A 548-amino-acid chain; its full sequence is MAELIISASDIEGAIEDYVSSFTADSEREEIGTVIDAGDGIAHVEGLPSVMTQELLEFPGGVLGVALNLDEHSVGAVILGEFEKIEEGQQVKRTGEVLSVPVGDAFLGRVINPLGQPIDGQGDIESDTRRALELQAPSVVQRQGVSEPLQTGIKAIDSQTPIGRGQRQLIIGDRKTGKTAVAVDTILNQRKAWETGDPKQQVRCVYVAIGQKGTTIASVKRALEEGGAMEYTTIVAAPASDAAGFKWLAPYTGSAIGQHWMYDGKHVLIVFDDLSKQADAYRAISLLLRRPPGREAFPGDVFYLHSRLLERCAKLSDELGGGSMTGLPIIETKANDISAFIPTNVISITDGQCFLESDLFNQGVRPAINVGVSVSRVGGAAQIKAMKEVAGSLRLELSQYRELESFAAFASDLDAASKAQLDRGARLVELLKQPQYTPYSVEDQVVAIFLGTKGHLDSVPVEDVSRFEQEVLEHVKASHDDILQEIRETKKLSESTEEKLTNVINDFKKGFSASDGSSVVVNEADAEAMDEADVEKESVKVRKPAPKK.

172 to 179 (GDRKTGKT) is an ATP binding site. The interval 526–548 (AEAMDEADVEKESVKVRKPAPKK) is disordered.

It belongs to the ATPase alpha/beta chains family. As to quaternary structure, F-type ATPases have 2 components, CF(1) - the catalytic core - and CF(0) - the membrane proton channel. CF(1) has five subunits: alpha(3), beta(3), gamma(1), delta(1), epsilon(1). CF(0) has three main subunits: a(1), b(2) and c(9-12). The alpha and beta chains form an alternating ring which encloses part of the gamma chain. CF(1) is attached to CF(0) by a central stalk formed by the gamma and epsilon chains, while a peripheral stalk is formed by the delta and b chains.

The protein localises to the cell membrane. It catalyses the reaction ATP + H2O + 4 H(+)(in) = ADP + phosphate + 5 H(+)(out). Produces ATP from ADP in the presence of a proton gradient across the membrane. The alpha chain is a regulatory subunit. In Mycolicibacterium gilvum (strain PYR-GCK) (Mycobacterium gilvum (strain PYR-GCK)), this protein is ATP synthase subunit alpha.